We begin with the raw amino-acid sequence, 202 residues long: Protease (202 aa).

Active-site residues include His-55, Asp-72, and Cys-122.

Belongs to the peptidase C5 family. As to quaternary structure, interacts with protease cofactor pVI-C; this interaction is necessary for protease activation.

It localises to the virion. Its subcellular location is the host nucleus. It catalyses the reaction Cleaves proteins of the adenovirus and its host cell at two consensus sites: -Yaa-Xaa-Gly-Gly-|-Xaa- and -Yaa-Xaa-Gly-Xaa-|-Gly- (in which Yaa is Met, Ile or Leu, and Xaa is any amino acid).. With respect to regulation, requires DNA and protease cofactor for maximal activation. Inside nascent virions, becomes partially activated by binding to the viral DNA, allowing it to cleave the cofactor that binds to the protease and fully activates it. Actin, like the viral protease cofactor, seems to act as a cofactor in the cleavage of cytokeratin 18 and of actin itself. Functionally, cleaves viral precursor proteins (pTP, pIIIa, pVI, pVII, pVIII, and pX) inside newly assembled particles giving rise to mature virions. Protease complexed to its cofactor slides along the viral DNA to specifically locate and cleave the viral precursors. Mature virions have a weakened organization compared to the unmature virions, thereby facilitating subsequent uncoating. Without maturation, the particle lacks infectivity and is unable to uncoat. Late in adenovirus infection, in the cytoplasm, may participate in the cytoskeleton destruction. Cleaves host cell cytoskeletal keratins K7 and K18. The sequence is that of Protease from Bovine adenovirus 7 (BAdV-7).